The following is a 210-amino-acid chain: ATP-dependent Clp protease proteolytic subunit (210 aa).

Catalysis depends on Ser-106, which acts as the Nucleophile. His-131 is a catalytic residue.

Belongs to the peptidase S14 family. In terms of assembly, fourteen ClpP subunits assemble into 2 heptameric rings which stack back to back to give a disk-like structure with a central cavity, resembling the structure of eukaryotic proteasomes.

Its subcellular location is the cytoplasm. It carries out the reaction Hydrolysis of proteins to small peptides in the presence of ATP and magnesium. alpha-casein is the usual test substrate. In the absence of ATP, only oligopeptides shorter than five residues are hydrolyzed (such as succinyl-Leu-Tyr-|-NHMec, and Leu-Tyr-Leu-|-Tyr-Trp, in which cleavage of the -Tyr-|-Leu- and -Tyr-|-Trp bonds also occurs).. Functionally, cleaves peptides in various proteins in a process that requires ATP hydrolysis. Has a chymotrypsin-like activity. Plays a major role in the degradation of misfolded proteins. The protein is ATP-dependent Clp protease proteolytic subunit of Bartonella quintana (strain Toulouse) (Rochalimaea quintana).